We begin with the raw amino-acid sequence, 522 residues long: Protein nucleotidyltransferase YdiU (522 aa).

ATP is bound by residues glycine 109, glycine 111, arginine 112, lysine 132, aspartate 144, glycine 145, arginine 195, and arginine 202. The Proton acceptor role is filled by aspartate 271. Residues asparagine 272 and aspartate 281 each contribute to the Mg(2+) site. An ATP-binding site is contributed by aspartate 281.

Belongs to the SELO family. Mg(2+) is required as a cofactor. Mn(2+) serves as cofactor.

The enzyme catalyses L-seryl-[protein] + ATP = 3-O-(5'-adenylyl)-L-seryl-[protein] + diphosphate. It carries out the reaction L-threonyl-[protein] + ATP = 3-O-(5'-adenylyl)-L-threonyl-[protein] + diphosphate. The catalysed reaction is L-tyrosyl-[protein] + ATP = O-(5'-adenylyl)-L-tyrosyl-[protein] + diphosphate. It catalyses the reaction L-histidyl-[protein] + UTP = N(tele)-(5'-uridylyl)-L-histidyl-[protein] + diphosphate. The enzyme catalyses L-seryl-[protein] + UTP = O-(5'-uridylyl)-L-seryl-[protein] + diphosphate. It carries out the reaction L-tyrosyl-[protein] + UTP = O-(5'-uridylyl)-L-tyrosyl-[protein] + diphosphate. Its function is as follows. Nucleotidyltransferase involved in the post-translational modification of proteins. It can catalyze the addition of adenosine monophosphate (AMP) or uridine monophosphate (UMP) to a protein, resulting in modifications known as AMPylation and UMPylation. The chain is Protein nucleotidyltransferase YdiU from Burkholderia multivorans (strain ATCC 17616 / 249).